We begin with the raw amino-acid sequence, 150 residues long: uncharacterized protein (150 aa).

Positions 5 to 66 constitute an HTH asnC-type domain; sequence LDKVDRRLLE…KPNYKKLNLG (62 aa). Residues 24–43 constitute a DNA-binding region (H-T-H motif); sequence IATLSKKLGIPRTTVHYRIK.

This is an uncharacterized protein from Pyrococcus horikoshii (strain ATCC 700860 / DSM 12428 / JCM 9974 / NBRC 100139 / OT-3).